A 324-amino-acid polypeptide reads, in one-letter code: Glyoxylate/hydroxypyruvate reductase B (324 aa).

Active-site residues include Arg237 and Glu266. The active-site Proton donor is the His285.

The protein belongs to the D-isomer specific 2-hydroxyacid dehydrogenase family. GhrB subfamily. Homodimer.

It is found in the cytoplasm. The catalysed reaction is glycolate + NADP(+) = glyoxylate + NADPH + H(+). It carries out the reaction (R)-glycerate + NAD(+) = 3-hydroxypyruvate + NADH + H(+). It catalyses the reaction (R)-glycerate + NADP(+) = 3-hydroxypyruvate + NADPH + H(+). Its function is as follows. Catalyzes the NADPH-dependent reduction of glyoxylate and hydroxypyruvate into glycolate and glycerate, respectively. The sequence is that of Glyoxylate/hydroxypyruvate reductase B from Escherichia coli (strain ATCC 8739 / DSM 1576 / NBRC 3972 / NCIMB 8545 / WDCM 00012 / Crooks).